The chain runs to 153 residues: CRIB domain-containing protein RIC4 (153 aa).

A CRIB domain is found at 99–112; sequence IGVPTNVKHVSHIG.

Interacts with ARAC4/ROP2 and ARAC11/ROP1. Expressed in roots, leaves, stems, flowers, siliques and pollen.

Its subcellular location is the cell membrane. Functionally, functions as a downstream effector of Rho-related GTP binding proteins of the 'Rho of Plants' (ROPs) family. Participates in the propagation of ROP GTPase signals in specific cellular responses. Required for actin cortical microfilament assembly. Activated by ARAC4/ROP2 to promote the assembly of cortical actin microfilaments required for lobe formation and lateral expansion of pavement cells. Interaction with, and activation by ARAC4/ROP2 is inhibited by RIC1. Functions as a downstream effector of ARAC11/ROP1 to promote the assembly of apical F-actin associated with vesicle accumulation in the tip of the growing pollen tube. Counteracts the ARAC11/ROP1-RIC3 pathway, which activates calcium signaling that leads to apical F-actin disassembly associated with exocytosis, to control actin dynamics and pollen tube apical growth. Downstream of ARAC11/ROP1, is involved in the growth responses to the root-colonizing endophytic fungus P.indica. The sequence is that of CRIB domain-containing protein RIC4 (RIC4) from Arabidopsis thaliana (Mouse-ear cress).